Consider the following 298-residue polypeptide: Small ribosomal subunit protein uS3m (298 aa).

It belongs to the universal ribosomal protein uS3 family.

Its subcellular location is the mitochondrion. The protein is Small ribosomal subunit protein uS3m (RPS3) of Acanthamoeba castellanii (Amoeba).